An 82-amino-acid chain; its full sequence is ATP synthase subunit c (82 aa).

2 consecutive transmembrane segments (helical) span residues 3-23 (PLIA…ASLG) and 57-77 (LAFM…LLFA).

As to quaternary structure, F-type ATPases have 2 components, F(1) - the catalytic core - and F(0) - the membrane proton channel. F(1) has five subunits: alpha(3), beta(3), gamma(1), delta(1), epsilon(1). F(0) has four main subunits: a(1), b(1), b'(1) and c(10-14). The alpha and beta chains form an alternating ring which encloses part of the gamma chain. F(1) is attached to F(0) by a central stalk formed by the gamma and epsilon chains, while a peripheral stalk is formed by the delta, b and b' chains.

It localises to the cellular thylakoid membrane. With respect to regulation, inhibited by dicyclohexylcarbodiimide. F(1)F(0) ATP synthase produces ATP from ADP in the presence of a proton or sodium gradient. F-type ATPases consist of two structural domains, F(1) containing the extramembraneous catalytic core and F(0) containing the membrane proton channel, linked together by a central stalk and a peripheral stalk. During catalysis, ATP synthesis in the catalytic domain of F(1) is coupled via a rotary mechanism of the central stalk subunits to proton translocation. Its function is as follows. Key component of the F(0) channel; it plays a direct role in translocation across the membrane. A homomeric c-ring of between 10-14 subunits forms the central stalk rotor element with the F(1) delta and epsilon subunits. In terms of biological role, the complex from the organism is particularly stable to disruption and remains functional after 6 hrs at 55 degrees Celsius. The sequence is that of ATP synthase subunit c (atpE) from Thermosynechococcus vestitus (strain NIES-2133 / IAM M-273 / BP-1).